The primary structure comprises 116 residues: Ribosome-binding factor A (116 aa).

Belongs to the RbfA family. Monomer. Binds 30S ribosomal subunits, but not 50S ribosomal subunits or 70S ribosomes.

It localises to the cytoplasm. Its function is as follows. One of several proteins that assist in the late maturation steps of the functional core of the 30S ribosomal subunit. Associates with free 30S ribosomal subunits (but not with 30S subunits that are part of 70S ribosomes or polysomes). Required for efficient processing of 16S rRNA. May interact with the 5'-terminal helix region of 16S rRNA. This chain is Ribosome-binding factor A, found in Ureaplasma parvum serovar 3 (strain ATCC 27815 / 27 / NCTC 11736).